We begin with the raw amino-acid sequence, 328 residues long: Apoptosis facilitator Bcl-2-like protein 14 (328 aa).

Position 44 is a phosphoserine (Ser-44). The BH3 motif lies at 213–227; it reads IVELLKFSGDQLGRE. A BH2 motif is present at residues 309 to 316; the sequence is WVQQNGGW.

It belongs to the Bcl-2 family. Phosphorylated by MELK, leading to inhibit its pro-apoptotic function.

It is found in the cytoplasm. Plays a role in apoptosis. The chain is Apoptosis facilitator Bcl-2-like protein 14 (Bcl2l14) from Mus musculus (Mouse).